Here is a 447-residue protein sequence, read N- to C-terminus: N-succinylarginine dihydrolase (447 aa).

Substrate is bound by residues 19 to 28 (AGLSFGNEAS), N110, and 137 to 138 (HR). Residue E174 is part of the active site. R212 contributes to the substrate binding site. The active site involves H248. 2 residues coordinate substrate: D250 and N359. C365 (nucleophile) is an active-site residue.

This sequence belongs to the succinylarginine dihydrolase family. In terms of assembly, homodimer.

The catalysed reaction is N(2)-succinyl-L-arginine + 2 H2O + 2 H(+) = N(2)-succinyl-L-ornithine + 2 NH4(+) + CO2. It participates in amino-acid degradation; L-arginine degradation via AST pathway; L-glutamate and succinate from L-arginine: step 2/5. Functionally, catalyzes the hydrolysis of N(2)-succinylarginine into N(2)-succinylornithine, ammonia and CO(2). This is N-succinylarginine dihydrolase from Salmonella schwarzengrund (strain CVM19633).